The sequence spans 883 residues: Translation initiation factor IF-2 (883 aa).

Residues 32–45 (NDLNGKNNSNSSIN) show a composition bias toward polar residues. Disordered stretches follow at residues 32–216 (NDLN…QNKY) and 251–275 (RKLG…AETE). Positions 46–62 (LDKHNNKVEYSQNRDNR) are enriched in basic and acidic residues. The span at 75–216 (GGYSQNRDNR…VGKNTSQNKY (142 aa)) shows a compositional bias: polar residues. Residues 251–260 (RKLGEKKKQQ) are compositionally biased toward basic and acidic residues. The tr-type G domain maps to 381 to 554 (EKPPVITIMG…DMMLLKANPS (174 aa)). The tract at residues 390–397 (GHVDHGKT) is G1. GTP is bound at residue 390–397 (GHVDHGKT). Residues 415–419 (GITQH) are G2. The segment at 436 to 439 (DTPG) is G3. GTP contacts are provided by residues 436–440 (DTPGH) and 490–493 (NKID). Residues 490–493 (NKID) are G4. A G5 region spans residues 526–528 (SAL).

Belongs to the TRAFAC class translation factor GTPase superfamily. Classic translation factor GTPase family. IF-2 subfamily.

It is found in the cytoplasm. Functionally, one of the essential components for the initiation of protein synthesis. Protects formylmethionyl-tRNA from spontaneous hydrolysis and promotes its binding to the 30S ribosomal subunits. Also involved in the hydrolysis of GTP during the formation of the 70S ribosomal complex. The sequence is that of Translation initiation factor IF-2 from Borrelia garinii subsp. bavariensis (strain ATCC BAA-2496 / DSM 23469 / PBi) (Borreliella bavariensis).